Reading from the N-terminus, the 533-residue chain is UDP-glucuronosyltransferase 1A1 (533 aa).

A signal peptide spans 1-25; sequence MAVESQGGRPLVLGLLLCVLGPVVS. N-linked (GlcNAc...) asparagine glycans are attached at residues Asn-102, Asn-295, and Asn-347. A helical transmembrane segment spans residues 491 to 507; that stretch reads VIGFLLAVVLTVAFITF.

It belongs to the UDP-glycosyltransferase family. In terms of assembly, homodimer. Homooligomer. Interacts with UGT1A3, UGT1A4, UGT1A6, UGT1A7, UGT1A8, UGT1A9 and UGT1A10 to form heterodimers. Isoform 1 interacts with isoform 2/i2 suggesting that oligomerization is involved in negative regulation of transferase activity by isoform 2. Isoform 1 also interacts with respective i2 isoforms of UGT1A3, UGT1A4, UGT1A6, UGT1A7, UGT1A8, UGT1A9 and UGT1A10. As to expression, expressed in liver, colon and small intestine. Not expressed in kidney, esophagus and skin. In terms of tissue distribution, expressed in liver, colon, small intestine and kidney. Not expressed in esophagus and skin.

It localises to the endoplasmic reticulum membrane. Its subcellular location is the cytoplasm. It is found in the perinuclear region. The catalysed reaction is glucuronate acceptor + UDP-alpha-D-glucuronate = acceptor beta-D-glucuronoside + UDP + H(+). It catalyses the reaction 17beta-estradiol + UDP-alpha-D-glucuronate = 17beta-estradiol 3-O-(beta-D-glucuronate) + UDP + H(+). The enzyme catalyses 2-hydroxyestrone + UDP-alpha-D-glucuronate = 2-hydroxyestrone 3-O-(beta-D-glucuronate) + UDP + H(+). It carries out the reaction 2-hydroxy-17beta-estradiol + UDP-alpha-D-glucuronate = 2-hydroxy-17beta-estradiol 3-O-(beta-D-glucuronate) + UDP + H(+). The catalysed reaction is 2-methoxy-17beta-estradiol + UDP-alpha-D-glucuronate = 2-methoxy-17beta-estradiol 3-O-(beta-D-glucuronate) + UDP + H(+). It catalyses the reaction 17alpha-estradiol + UDP-alpha-D-glucuronate = 17alpha-estradiol 3-O-(beta-D-glucuronate) + UDP + H(+). The enzyme catalyses 16beta,17beta-estriol + UDP-alpha-D-glucuronate = 16beta,17beta-estriol 16-O-(beta-D-glucuronate) + UDP + H(+). It carries out the reaction losartan + UDP-alpha-D-glucuronate = losartan-2-N-beta-D-glucuronide + UDP. The catalysed reaction is prunetin + UDP-alpha-D-glucuronate = prunetin-4'-O-beta-D-glucuronide + UDP. It catalyses the reaction SN-38 + UDP-alpha-D-glucuronate = SN-38 O-beta-D-glucuronide + UDP + H(+). The enzyme catalyses (4Z,15Z)-bilirubin IXalpha + UDP-alpha-D-glucuronate = (4Z,15Z)-bilirubin IXalpha C12-beta-D-glucuronoside + UDP. It carries out the reaction (4Z,15Z)-bilirubin IXalpha + UDP-alpha-D-glucuronate = (4Z,15Z)-bilirubin IXalpha C8-beta-D-glucuronoside + UDP. The catalysed reaction is (4Z,15Z)-bilirubin IXalpha C8-beta-D-glucuronoside + UDP-alpha-D-glucuronate = (4Z,15Z)-bilirubin IXalpha C8,C12-beta-D-bisglucuronoside + UDP. It catalyses the reaction (4Z,15Z)-bilirubin IXalpha C12-beta-D-glucuronoside + UDP-alpha-D-glucuronate = (4Z,15Z)-bilirubin IXalpha C8,C12-beta-D-bisglucuronoside + UDP. The enzyme catalyses 8-iso-prostaglandin F2alpha + UDP-alpha-D-glucuronate = 8-iso-prostaglandin F2alpha-glucuronide + UDP + H(+). It carries out the reaction (5Z,8Z,11Z,14Z)-eicosatetraenoate + UDP-alpha-D-glucuronate = O-[(5Z),(8Z),(11Z),(14Z)-eicosatetraenoyl]-beta-D-glucuronate + UDP. The catalysed reaction is 15-hydroxy-(5Z,8Z,11Z,13E)-eicosatetraenoate + UDP-alpha-D-glucuronate = 15-O-(beta-D-glucuronosyl)-(5Z,8Z,11Z,14Z)-eicosatetraenoate + UDP + H(+). It catalyses the reaction 20-hydroxy-(5Z,8Z,11Z,14Z)-eicosatetraenoate + UDP-alpha-D-glucuronate = 20-O-(beta-D-glucuronosyl)-(5Z,8Z,11Z,14Z)-eicosatetraenoate + UDP + H(+). The enzyme catalyses prostaglandin B1 + UDP-alpha-D-glucuronate = 15-O-(beta-D-glucuronosyl)-prostaglandin B1 + UDP + H(+). It carries out the reaction (E)-ferulate + UDP-alpha-D-glucuronate = (E)-4-O-(beta-D-glucuronosyl)-ferulate + UDP + H(+). The catalysed reaction is (E)-ferulate + UDP-alpha-D-glucuronate = (E)-ferulic acid beta-D-glucuronate ester + UDP. Its function is as follows. UDP-glucuronosyltransferase (UGT) that catalyzes phase II biotransformation reactions in which lipophilic substrates are conjugated with glucuronic acid to increase the metabolite's water solubility, thereby facilitating excretion into either the urine or bile. Essential for the elimination and detoxification of drugs, xenobiotics and endogenous compounds. Catalyzes the glucuronidation of endogenous estrogen hormones such as estradiol, estrone and estriol. Involved in the glucuronidation of bilirubin, a degradation product occurring in the normal catabolic pathway that breaks down heme in vertebrates. Involved in the glucuronidation of arachidonic acid (AA) and AA-derived eicosanoids including 15-HETE, 20-HETE, PGB1 and F2-isoprostane (8-iso-PGF2alpha). Involved in the glucuronidation of the phytochemical ferulic acid at the phenolic or the carboxylic acid group. Also catalyzes the glucuronidation the isoflavones genistein, daidzein, glycitein, formononetin, biochanin A and prunetin, which are phytoestrogens with anticancer and cardiovascular properties. Involved in the glucuronidation of the AGTR1 angiotensin receptor antagonist losartan, a drug which can inhibit the effect of angiotensin II. Involved in the biotransformation of 7-ethyl-10-hydroxycamptothecin (SN-38), the pharmacologically active metabolite of the anticancer drug irinotecan. Lacks UGT glucuronidation activity but acts as a negative regulator of isoform 1. The chain is UDP-glucuronosyltransferase 1A1 from Homo sapiens (Human).